The primary structure comprises 335 residues: Ferrochelatase (335 aa).

Fe cation-binding residues include His194 and Glu275.

It belongs to the ferrochelatase family.

It is found in the cytoplasm. The enzyme catalyses heme b + 2 H(+) = protoporphyrin IX + Fe(2+). Its pathway is porphyrin-containing compound metabolism; protoheme biosynthesis; protoheme from protoporphyrin-IX: step 1/1. In terms of biological role, catalyzes the ferrous insertion into protoporphyrin IX. The polypeptide is Ferrochelatase (Sodalis glossinidius (strain morsitans)).